Reading from the N-terminus, the 315-residue chain is Apolipoprotein F (315 aa).

Positions 1 to 24 are cleaved as a signal peptide; the sequence is MHSLRLILMSIQLLCYLLLCPVDA. The propeptide occupies 25 to 154; that stretch reads TSHGEATSVS…EQPGPKRAKR (130 aa).

Belongs to the apolipoprotein F family. In terms of tissue distribution, liver.

The protein resides in the secreted. Functionally, minor apolipoprotein that associates with LDL. Inhibits cholesteryl ester transfer protein (CETP) activity and appears to be an important regulator of cholesterol transport. Also associates to a lesser degree with VLDL, Apo-AI and Apo-AII. This chain is Apolipoprotein F (Apof), found in Mus musculus (Mouse).